Reading from the N-terminus, the 436-residue chain is 3-ketoacyl-CoA thiolase (436 aa).

The active-site Acyl-thioester intermediate is Cys99. Catalysis depends on proton acceptor residues His392 and Cys422.

The protein belongs to the thiolase-like superfamily. Thiolase family. Heterotetramer of two alpha chains (FadJ) and two beta chains (FadI).

It localises to the cytoplasm. The catalysed reaction is an acyl-CoA + acetyl-CoA = a 3-oxoacyl-CoA + CoA. It participates in lipid metabolism; fatty acid beta-oxidation. Its function is as follows. Catalyzes the final step of fatty acid oxidation in which acetyl-CoA is released and the CoA ester of a fatty acid two carbons shorter is formed. The polypeptide is 3-ketoacyl-CoA thiolase (Cronobacter sakazakii (strain ATCC BAA-894) (Enterobacter sakazakii)).